A 294-amino-acid polypeptide reads, in one-letter code: Protein PET54 (294 aa).

It is found in the mitochondrion inner membrane. Functionally, activator of specific mitochondrial mRNAs. PET54 is involved in the excision of intron aI5-beta from pre-mRNA for cytochrome c oxidase I (COX1) and plays a role in promoting the translation of COX3. The sequence is that of Protein PET54 (PET54) from Saccharomyces bayanus (Yeast).